A 432-amino-acid polypeptide reads, in one-letter code: Glutamyl-tRNA reductase (432 aa).

Substrate is bound by residues 49–52 (TCNR), S107, 112–114 (ETQ), and Q118. C50 (nucleophile) is an active-site residue. NADP(+) is bound at residue 186–191 (GAGEMG).

Belongs to the glutamyl-tRNA reductase family. In terms of assembly, homodimer.

It catalyses the reaction (S)-4-amino-5-oxopentanoate + tRNA(Glu) + NADP(+) = L-glutamyl-tRNA(Glu) + NADPH + H(+). It participates in porphyrin-containing compound metabolism; protoporphyrin-IX biosynthesis; 5-aminolevulinate from L-glutamyl-tRNA(Glu): step 1/2. In terms of biological role, catalyzes the NADPH-dependent reduction of glutamyl-tRNA(Glu) to glutamate 1-semialdehyde (GSA). The chain is Glutamyl-tRNA reductase from Campylobacter jejuni subsp. jejuni serotype O:6 (strain 81116 / NCTC 11828).